Here is a 420-residue protein sequence, read N- to C-terminus: UDP-N-acetylglucosamine 1-carboxyvinyltransferase (420 aa).

Residue 22–23 (KN) coordinates phosphoenolpyruvate. Position 94 (Arg94) interacts with UDP-N-acetyl-alpha-D-glucosamine. Cys118 serves as the catalytic Proton donor. Residue Cys118 is modified to 2-(S-cysteinyl)pyruvic acid O-phosphothioketal. Asp307 and Ile329 together coordinate UDP-N-acetyl-alpha-D-glucosamine.

This sequence belongs to the EPSP synthase family. MurA subfamily.

It localises to the cytoplasm. It carries out the reaction phosphoenolpyruvate + UDP-N-acetyl-alpha-D-glucosamine = UDP-N-acetyl-3-O-(1-carboxyvinyl)-alpha-D-glucosamine + phosphate. It functions in the pathway cell wall biogenesis; peptidoglycan biosynthesis. In terms of biological role, cell wall formation. Adds enolpyruvyl to UDP-N-acetylglucosamine. The polypeptide is UDP-N-acetylglucosamine 1-carboxyvinyltransferase (Gluconacetobacter diazotrophicus (strain ATCC 49037 / DSM 5601 / CCUG 37298 / CIP 103539 / LMG 7603 / PAl5)).